Reading from the N-terminus, the 384-residue chain is F-box/kelch-repeat protein At3g44120 (384 aa).

Residues 1–46 (MTLPELPKDLVEEILCFVPATSLKRLRSSCKEWNRLFKDDKRFARK) enclose the F-box domain. 3 Kelch repeats span residues 156–202 (CNKS…RECF), 264–314 (SVLV…FLLD), and 352–384 (GVQT…KRDY).

The sequence is that of F-box/kelch-repeat protein At3g44120 from Arabidopsis thaliana (Mouse-ear cress).